Consider the following 245-residue polypeptide: Ubiquinone/menaquinone biosynthesis C-methyltransferase UbiE (245 aa).

S-adenosyl-L-methionine contacts are provided by residues Thr71, Asp92, and 118–119; that span reads DA.

This sequence belongs to the class I-like SAM-binding methyltransferase superfamily. MenG/UbiE family.

The enzyme catalyses a 2-demethylmenaquinol + S-adenosyl-L-methionine = a menaquinol + S-adenosyl-L-homocysteine + H(+). The catalysed reaction is a 2-methoxy-6-(all-trans-polyprenyl)benzene-1,4-diol + S-adenosyl-L-methionine = a 5-methoxy-2-methyl-3-(all-trans-polyprenyl)benzene-1,4-diol + S-adenosyl-L-homocysteine + H(+). Its pathway is quinol/quinone metabolism; menaquinone biosynthesis; menaquinol from 1,4-dihydroxy-2-naphthoate: step 2/2. It participates in cofactor biosynthesis; ubiquinone biosynthesis. Functionally, methyltransferase required for the conversion of demethylmenaquinol (DMKH2) to menaquinol (MKH2) and the conversion of 2-polyprenyl-6-methoxy-1,4-benzoquinol (DDMQH2) to 2-polyprenyl-3-methyl-6-methoxy-1,4-benzoquinol (DMQH2). This chain is Ubiquinone/menaquinone biosynthesis C-methyltransferase UbiE, found in Neisseria gonorrhoeae (strain ATCC 700825 / FA 1090).